Here is a 415-residue protein sequence, read N- to C-terminus: 1-deoxy-D-xylulose 5-phosphate reductoisomerase (415 aa).

Residues Thr10, Gly11, Ser12, Ile13, Gly36, Arg37, Asn38, and Asn128 each coordinate NADPH. Lys129 lines the 1-deoxy-D-xylulose 5-phosphate pocket. Glu130 provides a ligand contact to NADPH. Mn(2+) is bound at residue Asp154. 1-deoxy-D-xylulose 5-phosphate-binding residues include Ser155, Glu156, Ser192, and His215. Glu156 serves as a coordination point for Mn(2+). Position 221 (Gly221) interacts with NADPH. Ser228, Asn233, Lys234, and Glu237 together coordinate 1-deoxy-D-xylulose 5-phosphate. Residue Glu237 coordinates Mn(2+).

It belongs to the DXR family. The cofactor is Mg(2+). Requires Mn(2+) as cofactor.

It catalyses the reaction 2-C-methyl-D-erythritol 4-phosphate + NADP(+) = 1-deoxy-D-xylulose 5-phosphate + NADPH + H(+). It participates in isoprenoid biosynthesis; isopentenyl diphosphate biosynthesis via DXP pathway; isopentenyl diphosphate from 1-deoxy-D-xylulose 5-phosphate: step 1/6. In terms of biological role, catalyzes the NADPH-dependent rearrangement and reduction of 1-deoxy-D-xylulose-5-phosphate (DXP) to 2-C-methyl-D-erythritol 4-phosphate (MEP). This chain is 1-deoxy-D-xylulose 5-phosphate reductoisomerase, found in Synechococcus sp. (strain CC9605).